A 425-amino-acid polypeptide reads, in one-letter code: Histone-binding protein RBBP7 (425 aa).

Ala-2 bears the N-acetylalanine mark. At Ser-3 the chain carries Phosphoserine. At Lys-4 the chain carries N6-acetyllysine; alternate. Lys-4 is covalently cross-linked (Glycyl lysine isopeptide (Lys-Gly) (interchain with G-Cter in SUMO2); alternate). Residue Lys-4 forms a Glycyl lysine isopeptide (Lys-Gly) (interchain with G-Cter in ubiquitin); alternate linkage. Thr-10 is modified (phosphothreonine). 7 WD repeats span residues Gln-47–His-122, Arg-128–Arg-173, Gly-181–Asp-217, Val-228–Asp-269, Val-275–Phe-312, Glu-318–His-369, and Ile-376–Met-403. At Ser-95 the chain carries Phosphoserine. Residue Lys-101 forms a Glycyl lysine isopeptide (Lys-Gly) (interchain with G-Cter in SUMO2) linkage. Position 119 is an N6-acetyllysine (Lys-119). Lys-155 is covalently cross-linked (Glycyl lysine isopeptide (Lys-Gly) (interchain with G-Cter in SUMO2)). Residue Lys-159 is modified to N6-acetyllysine; alternate. Residue Lys-159 forms a Glycyl lysine isopeptide (Lys-Gly) (interchain with G-Cter in SUMO2); alternate linkage. The residue at position 354 (Ser-354) is a Phosphoserine.

This sequence belongs to the WD repeat RBAP46/RBAP48/MSI1 family. As to quaternary structure, binds directly to helix 1 of the histone fold of histone H4, a region that is not accessible when H4 is in chromatin. Subunit of the type B histone acetyltransferase (HAT) complex, composed of RBBP7 and HAT1. Subunit of the core histone deacetylase (HDAC) complex, which is composed of HDAC1, HDAC2, RBBP4 and RBBP7. The core HDAC complex associates with SIN3A, ARID4B/SAP180, SAP18, SAP30, SAP130, SUDS3/SAP45 and possibly ARID4A/RBP1 and ING1 to form the SIN3 HDAC complex. Component of the nucleosome remodeling and deacetylase (NuRD) repressor complex, composed of core proteins MTA1, MTA2, MTA3, RBBP4, RBBP7, HDAC1, HDAC2, MBD2, MBD3, and peripherally associated proteins CDK2AP1, CDK2AP2, GATAD2A, GATAD2B, CHD3, CHD4 and CHD5. The exact stoichiometry of the NuRD complex is unknown, and some subunits such as MBD2 and MBD3, GATAD2A and GATAD2B, and CHD3, CHD4 and CHD5 define mutually exclusive NuRD complexes. The NuRD complex may interact with MBD3L1. The NuRD complex may interact with MBD3L2. Subunit of the PRC2/EED-EZH2 complex, which is composed of at least EED, EZH2, RBBP4, RBBP7 and SUZ12. The PRC2/EED-EZH2 complex may also associate with HDAC1. Component of the NURF-1 ISWI chromatin remodeling complex (also called the nucleosome-remodeling factor (NURF) complex) at least composed of SMARCA1, BPTF, RBBP4 and RBBP7. Within the complex interacts with SMARCA1. Component of the BPFT-SMARCA1 complex at least composed of SMARCA1, BPFT, RBBP4 and RBBP7; the complex is catalytically inactive and does not remodel chromatin. Within the complex interacts with SMARCA1. Interacts with BRCA1. Interacts with CDK2AP1. Interacts with CENPA. Interacts with CHD3. Interacts with CHD4. Interacts with CREBBP, and this interaction may be enhanced by the binding of phosphorylated CREB1 to CREBBP. Interacts with HDAC7. Interacts with MTA1. Interacts with PWWP2B. Interacts with RB1 (via viral protein-binding domain). Interacts with SUV39H1. As to expression, higher levels in brain, thymus, lung, spleen, kidney, testis, and ovary/uterus; lower levels in heart, liver, and muscle.

The protein localises to the nucleus. Its function is as follows. Core histone-binding subunit that may target chromatin remodeling factors, histone acetyltransferases and histone deacetylases to their histone substrates in a manner that is regulated by nucleosomal DNA. Component of several complexes which regulate chromatin metabolism. These include the type B histone acetyltransferase (HAT) complex, which is required for chromatin assembly following DNA replication; the core histone deacetylase (HDAC) complex, which promotes histone deacetylation and consequent transcriptional repression; the nucleosome remodeling and histone deacetylase complex (the NuRD complex), which promotes transcriptional repression by histone deacetylation and nucleosome remodeling; and the PRC2/EED-EZH2 complex, which promotes repression of homeotic genes during development; and the NURF (nucleosome remodeling factor) complex. In Mus musculus (Mouse), this protein is Histone-binding protein RBBP7 (Rbbp7).